The following is a 319-amino-acid chain: tRNA dimethylallyltransferase (319 aa).

An ATP-binding site is contributed by 15-22 (GPTASGKS). 17–22 (TASGKS) provides a ligand contact to substrate. Interaction with substrate tRNA stretches follow at residues 40–43 (DSRQ) and 164–168 (QRLVR).

Belongs to the IPP transferase family. As to quaternary structure, monomer. Requires Mg(2+) as cofactor.

The catalysed reaction is adenosine(37) in tRNA + dimethylallyl diphosphate = N(6)-dimethylallyladenosine(37) in tRNA + diphosphate. Catalyzes the transfer of a dimethylallyl group onto the adenine at position 37 in tRNAs that read codons beginning with uridine, leading to the formation of N6-(dimethylallyl)adenosine (i(6)A). The chain is tRNA dimethylallyltransferase from Chlorobium phaeobacteroides (strain DSM 266 / SMG 266 / 2430).